Reading from the N-terminus, the 24-residue chain is Cupiennin-5a (24 aa).

As to expression, expressed by the venom gland.

The protein resides in the secreted. In Cupiennius salei (American wandering spider), this protein is Cupiennin-5a.